Reading from the N-terminus, the 272-residue chain is MNMKKEIIVYSISDSLGGTSQKLLSAVTAQYPDIIFNNSYRFPFINKEEELLAILRDAIKDDALVISTLVDSKLAAVAREFSQANGLAYLDLMHPFFEIIREKTGTSPIEVPGTLHRLDTEYFNKISAIEFAVKYDDGKAPQGFLDSDLVLLGVSRTSKTPLSIYLANKGYKVSNLPLIPEVPLPQVLEKVDPERIIGLLCEPEKLSKIRSNRLNSLGLTQSTSYTDLEKIYEELDYSKEVFKKYRAHVINITDKSIEETAFLIEDHLKKLR.

ADP is bound at residue Gly-153–Thr-160.

This sequence belongs to the pyruvate, phosphate/water dikinase regulatory protein family. PDRP subfamily.

The enzyme catalyses N(tele)-phospho-L-histidyl/L-threonyl-[pyruvate, phosphate dikinase] + ADP = N(tele)-phospho-L-histidyl/O-phospho-L-threonyl-[pyruvate, phosphate dikinase] + AMP + H(+). It carries out the reaction N(tele)-phospho-L-histidyl/O-phospho-L-threonyl-[pyruvate, phosphate dikinase] + phosphate + H(+) = N(tele)-phospho-L-histidyl/L-threonyl-[pyruvate, phosphate dikinase] + diphosphate. Bifunctional serine/threonine kinase and phosphorylase involved in the regulation of the pyruvate, phosphate dikinase (PPDK) by catalyzing its phosphorylation/dephosphorylation. The sequence is that of Putative pyruvate, phosphate dikinase regulatory protein from Streptococcus sanguinis (strain SK36).